Consider the following 451-residue polypeptide: Probable NADH dehydrogenase (451 aa).

Residue 41 to 71 (KLIILGCGWGSYSFLKNLNSIKYDITVISPR) coordinates FAD. An NAD(+)-binding site is contributed by 199–236 (LSFVIVGGGATGIEFTSELNDFFSEDLSRLFPFVPVNE).

This sequence belongs to the NADH dehydrogenase family. FAD serves as cofactor.

The enzyme catalyses a ubiquinone + NADH + 5 H(+)(in) = a ubiquinol + NAD(+) + 4 H(+)(out). The sequence is that of Probable NADH dehydrogenase from Dictyostelium discoideum (Social amoeba).